The primary structure comprises 418 residues: UDP-N-acetylglucosamine 1-carboxyvinyltransferase 2 (418 aa).

Residue 22-23 (KN) coordinates phosphoenolpyruvate. R92 is a UDP-N-acetyl-alpha-D-glucosamine binding site. Residue C116 is the Proton donor of the active site. The residue at position 116 (C116) is a 2-(S-cysteinyl)pyruvic acid O-phosphothioketal. Residues D305 and I327 each contribute to the UDP-N-acetyl-alpha-D-glucosamine site.

This sequence belongs to the EPSP synthase family. MurA subfamily.

Its subcellular location is the cytoplasm. The enzyme catalyses phosphoenolpyruvate + UDP-N-acetyl-alpha-D-glucosamine = UDP-N-acetyl-3-O-(1-carboxyvinyl)-alpha-D-glucosamine + phosphate. Its pathway is cell wall biogenesis; peptidoglycan biosynthesis. Functionally, cell wall formation. Adds enolpyruvyl to UDP-N-acetylglucosamine. This Mesorhizobium japonicum (strain LMG 29417 / CECT 9101 / MAFF 303099) (Mesorhizobium loti (strain MAFF 303099)) protein is UDP-N-acetylglucosamine 1-carboxyvinyltransferase 2.